The primary structure comprises 313 residues: Foldase protein PrsA (313 aa).

The N-terminal stretch at 1–20 (MKKKLLAGAITLLSVATLAA) is a signal peptide. A lipid anchor (N-palmitoyl cysteine) is attached at cysteine 21. Cysteine 21 carries the S-diacylglycerol cysteine lipid modification. The region spanning 143 to 241 (TPDVTAQIIR…SQYYIVKLTK (99 aa)) is the PpiC domain.

Belongs to the PrsA family.

The protein resides in the cell membrane. The catalysed reaction is [protein]-peptidylproline (omega=180) = [protein]-peptidylproline (omega=0). In terms of biological role, plays a major role in protein secretion by helping the post-translocational extracellular folding of several secreted proteins. The sequence is that of Foldase protein PrsA from Streptococcus pneumoniae (strain P1031).